Here is a 394-residue protein sequence, read N- to C-terminus: Actin-related protein 2-A (394 aa).

Residues 160 to 162, 214 to 218, and 305 to 310 each bind ATP; these read GDG, RMIKE, and GGSTMY.

Belongs to the actin family. ARP2 subfamily. As to quaternary structure, component of the Arp2/3 complex composed of actr2/arp2, actr3/arp3, arpc1 (arpc1a or arpc1b), arpc2, arpc3, arpc4 and arpc5.

It is found in the cytoplasm. The protein resides in the cytoskeleton. It localises to the cell projection. The protein localises to the nucleus. Functionally, ATP-binding component of the Arp2/3 complex, a multiprotein complex that mediates actin polymerization upon stimulation by nucleation-promoting factor (NPF). The Arp2/3 complex mediates the formation of branched actin networks in the cytoplasm, providing the force for cell motility. Seems to contact the pointed end of the daughter actin filament. In addition to its role in the cytoplasmic cytoskeleton, the Arp2/3 complex also promotes actin polymerization in the nucleus, thereby regulating gene transcription and repair of damaged DNA. The Arp2/3 complex promotes homologous recombination (HR) repair in response to DNA damage by promoting nuclear actin polymerization, leading to drive motility of double-strand breaks (DSBs). The sequence is that of Actin-related protein 2-A (actr2-a) from Xenopus laevis (African clawed frog).